A 442-amino-acid polypeptide reads, in one-letter code: Trigger factor (442 aa).

Residues 165–250 (DDRVIIDFEG…LQKVMAPELP (86 aa)) form the PPIase FKBP-type domain.

This sequence belongs to the FKBP-type PPIase family. Tig subfamily.

The protein localises to the cytoplasm. It catalyses the reaction [protein]-peptidylproline (omega=180) = [protein]-peptidylproline (omega=0). Involved in protein export. Acts as a chaperone by maintaining the newly synthesized protein in an open conformation. Functions as a peptidyl-prolyl cis-trans isomerase. The polypeptide is Trigger factor (Coxiella burnetii (strain CbuK_Q154) (Coxiella burnetii (strain Q154))).